The sequence spans 417 residues: Type II methyltransferase M.Eco47II (417 aa).

An SAM-dependent MTase C5-type domain is found at 81–414 (YTVLELFAGA…KSVVHLLDKI (334 aa)). The active site involves Cys153.

Belongs to the class I-like SAM-binding methyltransferase superfamily. C5-methyltransferase family.

It carries out the reaction a 2'-deoxycytidine in DNA + S-adenosyl-L-methionine = a 5-methyl-2'-deoxycytidine in DNA + S-adenosyl-L-homocysteine + H(+). Its function is as follows. A methylase that recognizes the double-stranded sequence 5'-GGNCC-3', methylates C-? on both strands, and protects the DNA from cleavage by both the Eco47I and Eco47II endonucleases. This Escherichia coli protein is Type II methyltransferase M.Eco47II.